A 318-amino-acid chain; its full sequence is L-lactate dehydrogenase (318 aa).

NAD(+)-binding positions include valine 18, aspartate 39, lysine 44, tyrosine 69, and 83-84 (GA). The substrate site is built by glutamine 86 and arginine 92. Residues serine 105, 122–124 (VSN), and serine 147 each bind NAD(+). 124–127 (NPVD) contacts substrate. A substrate-binding site is contributed by 152-155 (DTSR). Histidine 179 (proton acceptor) is an active-site residue. At tyrosine 225 the chain carries Phosphotyrosine. Residue threonine 234 coordinates substrate.

It belongs to the LDH/MDH superfamily. LDH family. As to quaternary structure, homotetramer.

The protein resides in the cytoplasm. It carries out the reaction (S)-lactate + NAD(+) = pyruvate + NADH + H(+). The protein operates within fermentation; pyruvate fermentation to lactate; (S)-lactate from pyruvate: step 1/1. Functionally, catalyzes the conversion of lactate to pyruvate. The chain is L-lactate dehydrogenase from Clostridium botulinum (strain Okra / Type B1).